We begin with the raw amino-acid sequence, 476 residues long: Nodulation protein NoeA (476 aa).

Its function is as follows. Not known; does not seem to participate in nod factor synthesis but required for nodulation on some specific Medicago species such as M.littoralis. The protein is Nodulation protein NoeA (noeA) of Rhizobium meliloti (strain 1021) (Ensifer meliloti).